The following is a 194-amino-acid chain: Phosphoheptose isomerase (194 aa).

The region spanning 37–194 (IADTFKAGGK…LIEKEMVAQG (158 aa)) is the SIS domain. Residue 52 to 54 (NGG) participates in substrate binding. Zn(2+)-binding residues include His61 and Glu65. Substrate-binding positions include Glu65, 93–94 (ND), 119–121 (STS), Ser124, and Gln172. Residues Gln172 and His180 each coordinate Zn(2+).

Belongs to the SIS family. GmhA subfamily. Homotetramer. Zn(2+) is required as a cofactor.

The protein localises to the cytoplasm. It carries out the reaction 2 D-sedoheptulose 7-phosphate = D-glycero-alpha-D-manno-heptose 7-phosphate + D-glycero-beta-D-manno-heptose 7-phosphate. It functions in the pathway carbohydrate biosynthesis; D-glycero-D-manno-heptose 7-phosphate biosynthesis; D-glycero-alpha-D-manno-heptose 7-phosphate and D-glycero-beta-D-manno-heptose 7-phosphate from sedoheptulose 7-phosphate: step 1/1. Catalyzes the isomerization of sedoheptulose 7-phosphate in D-glycero-D-manno-heptose 7-phosphate. This Sodalis glossinidius (strain morsitans) protein is Phosphoheptose isomerase.